A 344-amino-acid chain; its full sequence is MNATNLQLISHAQKIDHVFKIIGYIVNPLGILFNTLLIILISTKTPKLLQSYSMLHLNFALCDLFSCLAGMLALQKIVFSGWSLTYIFHGACGQISSYFCYFLHVFVCHCLAHSQWILMISFLYRYYILDQISPDTVKIVRICILTYLPSLLFVIVYWSDVANEDALKRIVNSFHPEYIYDSKEIWGDLVIAGNMSCWSAATFSAIVYMTIPCFPIYGVIVFFRHKTLKSLDGRGRITMSETTRSSHKQLIKALTIQAIVPIFWLTASTFYLLALFQVVGRVIVENMPFRIMECMPMITPLISLYFVRPYRSALTGWFFPTSLLKPVIASAMLSSTAASVAPTP.

7 consecutive transmembrane segments (helical) span residues 21–41 (IIGYIVNPLGILFNTLLIILI), 54–74 (MLHLNFALCDLFSCLAGMLAL), 102–122 (FLHVFVCHCLAHSQWILMISF), 142–162 (ICILTYLPSLLFVIVYWSDVA), 203–223 (FSAIVYMTIPCFPIYGVIVFF), 259–279 (IVPIFWLTASTFYLLALFQVV), and 287–307 (MPFRIMECMPMITPLISLYFV).

This sequence belongs to the nematode receptor-like protein srd family.

It localises to the membrane. The chain is Serpentine receptor class delta-3 (srd-3) from Caenorhabditis elegans.